The chain runs to 1047 residues: Rab11 family-interacting protein 3 (1047 aa).

Disordered stretches follow at residues 1–107, 311–335, and 475–496; these read MELC…WPQE, SHSC…DVSH, and PGPP…TAQE. The span at 64–73 shows a compositional bias: basic and acidic residues; that stretch reads EPHAPSRWAK. 2 consecutive EF-hand domains span residues 496–531 and 528–563; these read EEGA…YGAE and YGAE…IRNG. Positions 509, 511, 513, 520, 541, 543, and 552 each coordinate Ca(2+). 3 positions are modified to phosphoserine: serine 641, serine 765, and serine 829. Residues 750-985 are a coiled coil; it reads EEDIADKVIF…NGQIITLSIQ (236 aa). The interval 775–879 is ARF-binding domain (ABD); sequence GEQHGRLRQE…MLDEIEELTQ (105 aa). The interval 882 to 906 is disordered; the sequence is SEEQENKRKMGDRLSHERHQFQRDK. Serine 938 and serine 939 each carry phosphoserine. Residues 985–1047 enclose the FIP-RBD domain; it reads QGAKSLFSTS…ETNPSILEVK (63 aa).

In terms of assembly, homodimer. Interacts with RAB11A; the interaction is direct and is required for the recruitment to endosomes. Interacts with RAB11B. Forms a ternary complex with RAB11A and dynein intermediate chain DYNC1LI1; RAB11FIP3 links RAB11A to dynein and the interaction regulates endocytic trafficking. Interacts with dynein intermediate chain and dynactin (DCTN1); the interaction activates dynein processivity. Interacts with ARF6 and EXOC7; the interaction serves for recruitment and tethering of recycling endosomes-derived vesicles to the cleavage furrow/midbody. Interacts with RACGAP1/MgcRacGAP; the interaction occurs at late telophase and is required for recruitment and tethering of recycling endosomes-derived vesicles to the cleavage furrow/midbody. Forms a complex with RAB11A and Rabin8/RAB3IP, probably a heterohexamer with two of each protein subunit, where RAB3IP and RAB11FIP3 simultaneously bind to RAB11A; the complex promotes preciliary trafficking. Forms a complex containing RAB11A, ASAP1, RAB3IP, RAP11FIP3 and ARF4; the complex promotes preciliary trafficking; the complex binds to RHO in photoreceptor cells and promotes RHO ciliary transport. Interacts with RAB11FIP4. Interacts with RAB25.

It localises to the recycling endosome membrane. Its subcellular location is the cytoplasm. It is found in the cytoskeleton. The protein localises to the microtubule organizing center. The protein resides in the centrosome. It localises to the cleavage furrow. Its subcellular location is the midbody. It is found in the golgi apparatus membrane. The protein localises to the golgi apparatus. The protein resides in the trans-Golgi network membrane. In terms of biological role, downstream effector molecule for Rab11 GTPase which is involved in endocytic trafficking, cytokinesis and intracellular ciliogenesis by participating in membrane delivery. Recruited by Rab11 to endosomes where it links Rab11 to dynein motor complex. The functional Rab11-RAB11FIP3-dynein complex regulates the movement of peripheral sorting endosomes (SE) along microtubule tracks toward the microtubule organizing center/centrosome, generating the endocytic recycling compartment (ERC) during interphase of cell cycle. Facilitates the interaction between dynein and dynactin and activates dynein processivity. Binding with ASAP1 is needed to regulate the pericentrosomal localization of recycling endosomes. The Rab11-RAB11FIP3 complex is also implicated in the transport during telophase of vesicles derived from recycling endosomes to the cleavage furrow via centrosome-anchored microtubules, where the vesicles function to deliver membrane during late cytokinesis and abscission. The recruitment of Rab11-RAB11FIP3-containing endosomes to the cleavage furrow and tethering to the midbody is co-mediated by RAB11FIP3 interaction with ARF6-exocyst and RACGAP1-MKLP1 tethering complexes. Also involved in the Rab11-Rabin8-Rab8 ciliogenesis cascade by facilitating the orderly assembly of a ciliary targeting complex containing Rab11, ASAP1, Rabin8/RAB3IP, RAB11FIP3 and ARF4, which directs preciliary vesicle trafficking to mother centriole and ciliogenesis initiation. Also promotes the activity of Rab11 and ASAP1 in the ARF4-dependent Golgi-to-cilia transport of the sensory receptor rhodopsin. Competes with WDR44 for binding to Rab11, which controls intracellular ciliogenesis pathway. May play a role in breast cancer cell motility by regulating actin cytoskeleton. This Mus musculus (Mouse) protein is Rab11 family-interacting protein 3.